The following is a 282-amino-acid chain: HTH-type transcriptional activator RhaR (282 aa).

The 99-residue stretch at 179-277 folds into the HTH araC/xylS-type domain; the sequence is DKLITALANS…GMTPSQWRHL (99 aa). 2 consecutive DNA-binding regions (H-T-H motif) follow at residues 196–217 and 244–267; these read DAFC…RAQT and ISEI…TRET.

Binds DNA as a dimer.

Its subcellular location is the cytoplasm. Its function is as follows. Activates expression of the rhaSR operon in response to L-rhamnose. In Salmonella dublin (strain CT_02021853), this protein is HTH-type transcriptional activator RhaR.